The sequence spans 197 residues: Protein GrpE (197 aa).

Positions 1-12 are enriched in basic and acidic residues; that stretch reads MTDSDGKTDKSG. The interval 1–35 is disordered; it reads MTDSDGKTDKSGEPAAEVEPVVSKPYVMPDDPEDD.

It belongs to the GrpE family. As to quaternary structure, homodimer.

It localises to the cytoplasm. In terms of biological role, participates actively in the response to hyperosmotic and heat shock by preventing the aggregation of stress-denatured proteins, in association with DnaK and GrpE. It is the nucleotide exchange factor for DnaK and may function as a thermosensor. Unfolded proteins bind initially to DnaJ; upon interaction with the DnaJ-bound protein, DnaK hydrolyzes its bound ATP, resulting in the formation of a stable complex. GrpE releases ADP from DnaK; ATP binding to DnaK triggers the release of the substrate protein, thus completing the reaction cycle. Several rounds of ATP-dependent interactions between DnaJ, DnaK and GrpE are required for fully efficient folding. This chain is Protein GrpE, found in Nitrobacter winogradskyi (strain ATCC 25391 / DSM 10237 / CIP 104748 / NCIMB 11846 / Nb-255).